Consider the following 610-residue polypeptide: Cytosolic 5'-nucleotidase 1B (610 aa).

Disordered regions lie at residues 1–34 and 101–277; these read MSQT…DKTG and GSQE…DEDD. Positions 9 to 34 are enriched in basic and acidic residues; that stretch reads KKNEPGMRSSKESLEAEKRKESDKTG. Residues 119–132 show a composition bias toward polar residues; sequence SQWSRISRSPSTKA. Over residues 148–166 the composition is skewed to low complexity; it reads PSSSTSSRTPSTSPSLHDS. Positions 167–183 are enriched in pro residues; the sequence is SPPPLSGQPSLQPPASP. Over residues 236–265 the composition is skewed to polar residues; the sequence is SRTSPTEWKSSSQRRGIYPASTQLDRNSLS. Asp-467 functions as the Nucleophile in the catalytic mechanism.

This sequence belongs to the 5'-nucleotidase type 3 family. Mg(2+) is required as a cofactor. Highly expressed in testis, placenta and pancreas. Detected at lower levels in heart, kidney, liver and lung.

It localises to the cytoplasm. The catalysed reaction is a ribonucleoside 5'-phosphate + H2O = a ribonucleoside + phosphate. The enzyme catalyses AMP + H2O = adenosine + phosphate. Activated by ADP. Functionally, catalyzes the hydrolysis of nucleotide monophosphates, releasing inorganic phosphate and the corresponding nucleoside, AMP is the major substrate. This chain is Cytosolic 5'-nucleotidase 1B (NT5C1B), found in Homo sapiens (Human).